The chain runs to 139 residues: D-ribose pyranase (139 aa).

The Proton donor role is filled by His-20. Substrate-binding positions include Asp-28, His-106, and 128–130 (YAN).

This sequence belongs to the RbsD / FucU family. RbsD subfamily. In terms of assembly, homodecamer.

It localises to the cytoplasm. The catalysed reaction is beta-D-ribopyranose = beta-D-ribofuranose. It functions in the pathway carbohydrate metabolism; D-ribose degradation; D-ribose 5-phosphate from beta-D-ribopyranose: step 1/2. Functionally, catalyzes the interconversion of beta-pyran and beta-furan forms of D-ribose. The sequence is that of D-ribose pyranase from Pasteurella multocida (strain Pm70).